A 200-amino-acid polypeptide reads, in one-letter code: Phospholipase A2 inhibitor CgMIP-I (200 aa).

A signal peptide spans Met-1–Ser-19. Disulfide bonds link Cys-22-Cys-46, Cys-25-Cys-32, Cys-39-Cys-67, Cys-73-Cys-94, Cys-95-Cys-100, Cys-118-Cys-143, and Cys-136-Cys-165. An N-linked (GlcNAc...) asparagine glycan is attached at Asn-176.

It belongs to the CNF-like-inhibitor family. In terms of assembly, homomer of 110 kDa composed of 20-25-kDa subunits. N-glycosylated. The glycosidic chain may contain superficial sialic acid residues. In terms of tissue distribution, expressed by the liver.

The protein resides in the secreted. Its function is as follows. Inhibits the enzymatic activity of basic phospholipase A2. Specifically neutralizes PLA2, myotoxic, edema-forming, cytolytic, and anti-coagulant activities, as well as intracerebral lethal effect of the basic myotoxin I from the same venom (AC P0DQP6), crotoxin heterodimer and crotoxin subunit B alone. Does not block the enzymatic activity of crude acidic PLA2 fractions from the same venom. The polypeptide is Phospholipase A2 inhibitor CgMIP-I (Cerrophidion godmani (Porthidium godmani)).